Reading from the N-terminus, the 285-residue chain is RING finger protein 223 (285 aa).

Residues 81–132 (CSICFSGYDNIFKTPKELSCSHVFCLECLARLAAAQPAGRSGREAVPCPFCR) form an RING-type zinc finger. Residues 230-250 (VALVSVLLLVLFCVILWPVQC) traverse the membrane as a helical segment.

Its subcellular location is the membrane. In Mus musculus (Mouse), this protein is RING finger protein 223 (Rnf223).